Here is a 165-residue protein sequence, read N- to C-terminus: Small ribosomal subunit protein uS5 (165 aa).

Positions 13–76 (LEEKVLVVNR…EAARKNLITI (64 aa)) constitute an S5 DRBM domain.

This sequence belongs to the universal ribosomal protein uS5 family. Part of the 30S ribosomal subunit. Contacts proteins S4 and S8.

With S4 and S12 plays an important role in translational accuracy. In terms of biological role, located at the back of the 30S subunit body where it stabilizes the conformation of the head with respect to the body. The polypeptide is Small ribosomal subunit protein uS5 (Chlamydia felis (strain Fe/C-56) (Chlamydophila felis)).